Consider the following 473-residue polypeptide: B box and SPRY domain-containing protein (473 aa).

The segment at 1–69 (MSADVSGTES…PKQGSERSQL (69 aa)) is disordered. Positions 35 to 51 (KPGPGPEPRPESGPEPG) are enriched in pro residues. Residues 65–113 (ERSQLCPEHFEPLSWFCLSERRPVCATCAGFGGRCHRHRIRRAEEHAEE) form a B box-type zinc finger. The B30.2/SPRY domain maps to 259–455 (SPLLTQLWAA…ISIVRGPLAT (197 aa)).

As to quaternary structure, interacts with YWHAZ/14-3-3 protein zeta. Interacts with TRPV5 and TRPV6. As to expression, according to PubMed:10978534, testis-specific. According to PubMed:16371431, broadly expressed.

It is found in the cytoplasm. It localises to the membrane. Its function is as follows. May regulate epithelial calcium transport by inhibiting TRPV5 activity. This Mus musculus (Mouse) protein is B box and SPRY domain-containing protein (Bspry).